The primary structure comprises 614 residues: MTIDYQKLGLIAGIEIHQQLNTKEKLFCRCPTTIREAEESKGEFFRYLRATKSEMGELDRAAEEEMMQVRQFRYLTYDTTCLVENDEEPPAPLNEEALDIVLTIAKVCRMTPVPEIHTMRKLVIDGSNTSGFQRTALVAMNGTLPGGAGIETVCLEEEAAQRIEDTIFSLDRLGIPLIEITTSPCMHTPEAVQETAAQIGMILRSTGKVKRGLGTIRQDINISIREGARVEIKGVQELDLIAEVVRREVCRQVSLLEIREELKKRGASVEKTLVDVTSLFTDSKSRVLKSAPKILAIRLNKFAGLVGREIQPGRRLGSEMSDYAKKCGVGGLFHTDELPAYGVTEDEVTNLKKALDATPDDCVIIVADKPQRCQCAMQQIIRRAEMAFEGVPKETRKMLEGGSTAYMRPLPGAARMYPETDVFQVRVTPERFASLEIPEMIDDTIARYMQEFGLAREVARQMAYSERRSAFEEAIHSGIKPALAERAFNSTLRELSREGAQVHRIKDEDILQVLILINSGEVAKEALSPILTALAEGKTPAEACERAAPKVSEEELTKIINRIVAERADFIKERGNAATGPVMGVVMKEVRGSVDGKIVNQILREAISQVLKNA.

Belongs to the GatB/GatE family. GatE subfamily. In terms of assembly, heterodimer of GatD and GatE.

The enzyme catalyses L-glutamyl-tRNA(Gln) + L-glutamine + ATP + H2O = L-glutaminyl-tRNA(Gln) + L-glutamate + ADP + phosphate + H(+). In terms of biological role, allows the formation of correctly charged Gln-tRNA(Gln) through the transamidation of misacylated Glu-tRNA(Gln) in organisms which lack glutaminyl-tRNA synthetase. The reaction takes place in the presence of glutamine and ATP through an activated gamma-phospho-Glu-tRNA(Gln). The GatDE system is specific for glutamate and does not act on aspartate. In Methanospirillum hungatei JF-1 (strain ATCC 27890 / DSM 864 / NBRC 100397 / JF-1), this protein is Glutamyl-tRNA(Gln) amidotransferase subunit E.